Reading from the N-terminus, the 139-residue chain is Large ribosomal subunit protein uL14A (139 aa).

The protein belongs to the universal ribosomal protein uL14 family. As to quaternary structure, component of the large ribosomal subunit (LSU). Mature yeast ribosomes consist of a small (40S) and a large (60S) subunit. The 40S small subunit contains 1 molecule of ribosomal RNA (18S rRNA) and at least 33 different proteins. The large 60S subunit contains 3 rRNA molecules (25S, 5.8S and 5S rRNA) and at least 46 different proteins.

The protein localises to the cytoplasm. Its subcellular location is the nucleus. In terms of biological role, component of the ribosome, a large ribonucleoprotein complex responsible for the synthesis of proteins in the cell. The small ribosomal subunit (SSU) binds messenger RNAs (mRNAs) and translates the encoded message by selecting cognate aminoacyl-transfer RNA (tRNA) molecules. The large subunit (LSU) contains the ribosomal catalytic site termed the peptidyl transferase center (PTC), which catalyzes the formation of peptide bonds, thereby polymerizing the amino acids delivered by tRNAs into a polypeptide chain. The nascent polypeptides leave the ribosome through a tunnel in the LSU and interact with protein factors that function in enzymatic processing, targeting, and the membrane insertion of nascent chains at the exit of the ribosomal tunnel. This is Large ribosomal subunit protein uL14A (rpl2301) from Schizosaccharomyces pombe (strain 972 / ATCC 24843) (Fission yeast).